Here is a 338-residue protein sequence, read N- to C-terminus: Gibberellin 2-beta-dioxygenase 8 (338 aa).

The 100-residue stretch at 191–290 (NTCYLRMNRY…RFSTAYFMCP (100 aa)) folds into the Fe2OG dioxygenase domain. 3 residues coordinate Fe cation: His215, Asp217, and His271. The active site involves Arg281. Arg281 contacts 2-oxoglutarate.

The protein belongs to the iron/ascorbate-dependent oxidoreductase family. GA2OX subfamily. Requires Fe(2+) as cofactor.

The enzyme catalyses gibberellin A1 + 2-oxoglutarate + O2 = gibberellin A8 + succinate + CO2. The protein operates within plant hormone biosynthesis; gibberellin biosynthesis. Catalyzes the 2-beta-hydroxylation of gibberellins (GA) precursors, rendering them unable to be converted to active GAs. Hydroxylates the C20-GA GA12 and GA53, but is not active on C19-GAs, like GA1, GA4, GA9 and GA20. This is Gibberellin 2-beta-dioxygenase 8 (GA2OX8) from Arabidopsis thaliana (Mouse-ear cress).